The chain runs to 308 residues: Shikimate kinase 1, chloroplastic (308 aa).

The N-terminal 62 residues, 1–62, are a transit peptide targeting the chloroplast; sequence MEAGVGLALQ…RGSKPVAPLR (62 aa). ATP is bound at residue 103–110; sequence GMMGSGKS. Ser-110 serves as a coordination point for Mg(2+). Substrate is bound by residues Asp-128, Arg-153, and Gly-175. Arg-214 is a binding site for ATP.

This sequence belongs to the shikimate kinase family. Mg(2+) serves as cofactor. Expressed in panicles.

The protein resides in the plastid. It is found in the chloroplast. It carries out the reaction shikimate + ATP = 3-phosphoshikimate + ADP + H(+). It functions in the pathway metabolic intermediate biosynthesis; chorismate biosynthesis; chorismate from D-erythrose 4-phosphate and phosphoenolpyruvate: step 5/7. Catalyzes the specific phosphorylation of the 3-hydroxyl group of shikimic acid using ATP as a cosubstrate. This is Shikimate kinase 1, chloroplastic (SK1) from Oryza sativa subsp. japonica (Rice).